The primary structure comprises 251 residues: Small ribosomal subunit protein uS2 (251 aa).

The protein belongs to the universal ribosomal protein uS2 family.

The polypeptide is Small ribosomal subunit protein uS2 (Nitrosomonas europaea (strain ATCC 19718 / CIP 103999 / KCTC 2705 / NBRC 14298)).